Reading from the N-terminus, the 246-residue chain is Small ribosomal subunit protein uS2 (246 aa).

Belongs to the universal ribosomal protein uS2 family.

The protein is Small ribosomal subunit protein uS2 of Pseudomonas paraeruginosa (strain DSM 24068 / PA7) (Pseudomonas aeruginosa (strain PA7)).